A 637-amino-acid chain; its full sequence is Probable serine/threonine-protein kinase DDB_G0283065 (637 aa).

Disordered stretches follow at residues asparagine 36–arginine 88 and asparagine 155–asparagine 234. The segment covering asparagine 53–lysine 85 has biased composition (low complexity). The 394-residue stretch at phenylalanine 236 to phenylalanine 629 folds into the Protein kinase domain. Residues leucine 242–valine 250 and lysine 265 each bind ATP. Residue aspartate 479 is the Proton acceptor of the active site.

This sequence belongs to the protein kinase superfamily. Ser/Thr protein kinase family. GCN2 subfamily.

It catalyses the reaction L-seryl-[protein] + ATP = O-phospho-L-seryl-[protein] + ADP + H(+). The catalysed reaction is L-threonyl-[protein] + ATP = O-phospho-L-threonyl-[protein] + ADP + H(+). This chain is Probable serine/threonine-protein kinase DDB_G0283065, found in Dictyostelium discoideum (Social amoeba).